The chain runs to 364 residues: Geranylgeranyl pyrophosphate synthase janG (364 aa).

3 residues coordinate isopentenyl diphosphate: Lys-83, Arg-86, and His-115. Residues Asp-122 and Asp-126 each contribute to the Mg(2+) site. Residue Arg-131 participates in dimethylallyl diphosphate binding. Arg-132 serves as a coordination point for isopentenyl diphosphate. Residues Lys-209, Thr-210, and Gln-243 each coordinate dimethylallyl diphosphate. Mg(2+) is bound at residue Asp-246. Residues Asn-250, Lys-260, and Lys-270 each coordinate dimethylallyl diphosphate.

Belongs to the FPP/GGPP synthase family. Mg(2+) is required as a cofactor.

It catalyses the reaction isopentenyl diphosphate + dimethylallyl diphosphate = (2E)-geranyl diphosphate + diphosphate. The enzyme catalyses isopentenyl diphosphate + (2E)-geranyl diphosphate = (2E,6E)-farnesyl diphosphate + diphosphate. The catalysed reaction is isopentenyl diphosphate + (2E,6E)-farnesyl diphosphate = (2E,6E,10E)-geranylgeranyl diphosphate + diphosphate. Its pathway is secondary metabolite biosynthesis. Its function is as follows. Geranylgeranyl pyrophosphate synthase; part of the gene cluster that mediates the biosynthesis of the indole diterpenes janthitremanes such as shearinine K or shearinine A. The geranylgeranyl diphosphate (GGPP) synthase janG catalyzes the first step in janthitremane biosynthesis via conversion of farnesyl pyrophosphate and isopentyl pyrophosphate into geranylgeranyl pyrophosphate (GGPP). Condensation of indole-3-glycerol phosphate with GGPP by the prenyl transferase janC then forms 3-geranylgeranylindole (3-GGI). Epoxidation by the FAD-dependent monooxygenase janM leads to a epoxidized-GGI that is substrate of the terpene cyclase janB for cyclization to yield paspaline. Paspaline is subsequently converted to 13-desoxypaspaline by the cytochrome P450 monooxygenase janP, via beta-PC-M6 in a series of alpha-face oxidations. The cytochrome P450 monooxygenase janQ is proposed to carry out sequential beta-face oxidation steps at C-7 and C-13 of 13-desoxypaspaline to form paspalicine and paspalinine respectively. The indole diterpene prenyltransferase janD may then convert paspalinine into shearinine K which is substrate of janO and/or additional enzymes for oxidation and cyclization to generate shearinine A. The sequence is that of Geranylgeranyl pyrophosphate synthase janG from Penicillium janthinellum (Penicillium vitale).